A 919-amino-acid polypeptide reads, in one-letter code: MVGSRSASHQKTVKIVPMTNRADKLPKSWDPQAVEKDLYEGWVEKGYFTADPSSSKPAFSIVLPPPNVTGQLHMGHALDHTLMDGIARRKRMQGYEVLWLPGMDHAGIATQTKVEAMLKETEGKSRWDYSREEFIEHVWEWKRKFGGTIGTQMRAIGDSVDWSRERFTLDEGLSRAVQTIFKQMYDRGMIYQANRLVNWSPILETAVSDIEVVYKDVEGELVSIRYGSLNDDEPHVIVATTRVETMLGDVAVAVHPDDERYADLVGTTLPHPFLPDRQMIVVADDYVDPEFGTGAVKITPAHDPNDYALGLRHNLDMPNIMDATGHIAGTGTQFDGMDRFEARVKIREALAEQGRIVKEVRPYVHSVGHSERSGEPIEPRLSLQWWVKVEKLATMAGDAIREGDTVIHPKSSEPRYFDWVDDMHDWCISRQLWWGHRIPIWYGPEDAEGNRDIVCVGPDEQPPAGYEQDPDVLDTWFSSALWPFSTMGWPDKTPELDKFYPTSVLVTAYDILFFWVARMMMFGTLAGETTPEILGQGTDGRPQIPFNDLFLHGLVRDEQGRKMSKSLGNGIDPMDWVERFGADALRFTLARGANPGVDLPVGEDSAQSSRNFATKLFNATKFALMNGAEVGTLPERSELTDADRWILDRLEEVRVSVDDYFDRYQFAKGNEALYQFAWGEFCDWYLEIAKVQIPRDMEAASAQEQARGRNTQIVLGQVLDALLRMLHPAMPFVTEVLWKALTDGESLNVAEWPTAAMTNGGVATDEVAARRMADVEKLVTEIRRFRSDQGVKPSQKVPGAVDFAAADLAAQEDLVRSLARLDQPAEDFAASASIEVRLSQATIEISVDTSGTVDKEAERKRLDKDLAAATKELETTAKKLGNESFLAKAPEAVVAKIRERQQIAQEEVARISARLEELK.

Positions 66-76 match the 'HIGH' region motif; the sequence is PNVTGQLHMGH. A 'KMSKS' region motif is present at residues 562-566; that stretch reads KMSKS. Lys-565 serves as a coordination point for ATP. The stretch at 852 to 919 forms a coiled coil; that stretch reads TVDKEAERKR…RISARLEELK (68 aa).

Belongs to the class-I aminoacyl-tRNA synthetase family. ValS type 1 subfamily. As to quaternary structure, monomer.

It is found in the cytoplasm. The catalysed reaction is tRNA(Val) + L-valine + ATP = L-valyl-tRNA(Val) + AMP + diphosphate. Functionally, catalyzes the attachment of valine to tRNA(Val). As ValRS can inadvertently accommodate and process structurally similar amino acids such as threonine, to avoid such errors, it has a 'posttransfer' editing activity that hydrolyzes mischarged Thr-tRNA(Val) in a tRNA-dependent manner. This chain is Valine--tRNA ligase, found in Corynebacterium diphtheriae (strain ATCC 700971 / NCTC 13129 / Biotype gravis).